Here is a 488-residue protein sequence, read N- to C-terminus: Envelope glycoprotein gp62 (488 aa).

Positions 1-20 are cleaved as a signal peptide; sequence MGKFLATLILFFQFCPLILG. Topologically, residues 21-442 are extracellular; the sequence is DYSPSCCTLT…LGLSQWAREA (422 aa). Asparagine 140 and asparagine 222 each carry an N-linked (GlcNAc...) asparagine; by host glycan. Positions 225–228 match the CXXC motif; it reads CIVC. 3 cysteine pairs are disulfide-bonded: cysteine 225–cysteine 228, cysteine 225–cysteine 401, and cysteine 393–cysteine 400. Asparagine 244 and asparagine 272 each carry an N-linked (GlcNAc...) asparagine; by host glycan. The fusion peptide stretch occupies residues 313 to 333; it reads AVPVAVWLVSALAIGAGVAGG. Coiled coils occupy residues 341 to 387 and 397 to 429; these read ASGK…LLFW and QEQC…GWGL. Residues 376–392 form an immunosuppression region; the sequence is AQNRRGLDLLFWEQGGL. The CX6CC signature appears at 393–401; it reads CKALQEQCC. A glycan (N-linked (GlcNAc...) asparagine; by host) is linked at asparagine 404. Residues 443 to 463 traverse the membrane as a helical segment; it reads LQTGITLVALLLLVILAGPCI. The S-palmitoyl cysteine; by host moiety is linked to residue cysteine 462. At 464 to 488 the chain is on the cytoplasmic side; that stretch reads LRQLRHLPSRVRYPHYSLINPESSL.

The mature envelope protein (Env) consists of a trimer of SU-TM heterodimers attached by a labile interchain disulfide bond. Specific enzymatic cleavages in vivo yield mature proteins. Envelope glycoproteins are synthesized as an inactive precursor that is N-glycosylated and processed likely by host cell furin or by a furin-like protease in the Golgi to yield the mature SU and TM proteins. The cleavage site between SU and TM requires the minimal sequence [KR]-X-[KR]-R. Post-translationally, the CXXC motif is highly conserved across a broad range of retroviral envelope proteins. It is thought to participate in the formation of a labile disulfide bond possibly with the CX6CC motif present in the transmembrane protein. Isomerization of the intersubunit disulfide bond to an SU intrachain disulfide bond is thought to occur upon receptor recognition in order to allow membrane fusion. In terms of processing, the transmembrane protein is palmitoylated.

Its subcellular location is the virion membrane. The protein resides in the host cell membrane. In terms of biological role, the surface protein (SU) attaches the virus to the host cell by binding to its receptor. This interaction triggers the refolding of the transmembrane protein (TM) and is thought to activate its fusogenic potential by unmasking its fusion peptide. Fusion occurs at the host cell plasma membrane. Functionally, the transmembrane protein (TM) acts as a class I viral fusion protein. Under the current model, the protein has at least 3 conformational states: pre-fusion native state, pre-hairpin intermediate state, and post-fusion hairpin state. During viral and target cell membrane fusion, the coiled coil regions (heptad repeats) assume a trimer-of-hairpins structure, positioning the fusion peptide in close proximity to the C-terminal region of the ectodomain. The formation of this structure appears to drive apposition and subsequent fusion of viral and target cell membranes. Membranes fusion leads to delivery of the nucleocapsid into the cytoplasm. In Human T-cell leukemia virus 1 (isolate Caribbea CH subtype A) (HTLV-1), this protein is Envelope glycoprotein gp62 (env).